The primary structure comprises 222 residues: UPF0128 protein PYRAB08320 (222 aa).

This sequence belongs to the UPF0128 family.

This chain is UPF0128 protein PYRAB08320, found in Pyrococcus abyssi (strain GE5 / Orsay).